The primary structure comprises 281 residues: DSC E3 ubiquitin ligase complex subunit 4 (281 aa).

4 helical membrane-spanning segments follow: residues 22–42, 62–82, 84–104, and 115–135; these read LCYA…LLLL, LPLF…RMFF, LPTA…INFI, and FITS…ILIA. The span at 145–154 shows a compositional bias: polar residues; the sequence is HIQASQSGLS. Disordered stretches follow at residues 145–183 and 256–281; these read HIQA…EDLQ and NTNS…TNPI. Positions 157–167 are enriched in acidic residues; it reads DGDEEPSDLIT. A compositionally biased stretch (basic and acidic residues) spans 168–183; sequence EDSRDTQQGQRQEDLQ.

Component of the DSC E3 ubiquitin ligase complex composed of dsc1, dsc2, dsc3 and dsc4.

It is found in the endoplasmic reticulum membrane. The protein localises to the golgi apparatus membrane. It participates in protein modification; protein ubiquitination. In terms of biological role, component of the DSC E3 ubiquitin ligase complex which is required for the sre1 transcriptional activator proteolytic cleavage to release the soluble transcription factor from the membrane in low oxygen or sterol conditions. The complex also plays an important role in the multivesicular body (MVB) pathway and functions in a post-endoplasmic reticulum pathway for protein degradation. The polypeptide is DSC E3 ubiquitin ligase complex subunit 4 (dsc4) (Schizosaccharomyces pombe (strain 972 / ATCC 24843) (Fission yeast)).